A 67-amino-acid chain; its full sequence is Kappa-conotoxin-like Em11.8 (67 aa).

The signal sequence occupies residues 1–26 (MMFRLTSVSCFLLVIACLNLFQVVLT). Disulfide bonds link Cys-29-Cys-43, Cys-36-Cys-48, Cys-42-Cys-51, and Cys-47-Cys-55. Phe-59 is subject to Phenylalanine amide. Positions 63–67 (ATFQE) are excised as a propeptide.

This sequence belongs to the conotoxin I2 superfamily. In terms of tissue distribution, expressed by the venom duct.

The protein localises to the secreted. Inhibits the vertebrate voltage-gated potassium channels Kv1.1/KCNA1 and Kv1.3/KCNA3. The polypeptide is Kappa-conotoxin-like Em11.8 (Conus emaciatus (False virgin cone)).